Reading from the N-terminus, the 137-residue chain is ER-derived vesicles protein erv14 (137 aa).

Over 1-9 (MMSFGSFVY) the chain is Cytoplasmic. The chain crosses the membrane as a helical span at residues 10–30 (IACLLLNGANMLLQIFCVIMF). The Extracellular portion of the chain corresponds to 31-62 (SDLEMDYINPIDLCNKLNDLVMPEIISHTLVT). The chain crosses the membrane as a helical span at residues 63–83 (LLLLLGKKWLLFLANLPLLVF). Over 84-114 (HANQVIHKTHILDATEIFRQLGRHKRDNFIK) the chain is Cytoplasmic. Residues 115–135 (VTFYLIMFFTLLYCMVMSLIQ) form a helical membrane-spanning segment. Residues 136–137 (EE) are Extracellular-facing.

Belongs to the cornichon family.

The protein resides in the endoplasmic reticulum. The protein localises to the membrane. It localises to the golgi apparatus membrane. In terms of biological role, regulates export of the secretory proteins from the endoplasmic reticulum in COPII-coated vesicles. The polypeptide is ER-derived vesicles protein erv14 (erv14) (Schizosaccharomyces pombe (strain 972 / ATCC 24843) (Fission yeast)).